The chain runs to 66 residues: Large ribosomal subunit protein bL35 (66 aa).

2 stretches are compositionally biased toward basic residues: residues 1–15 (MPKLKTKSSAKKRFK) and 28–45 (TKRHGMTKRSKRSLRTRR). Residues 1-49 (MPKLKTKSSAKKRFKVTASGRVMSAQSTKRHGMTKRSKRSLRTRRGIAQ) form a disordered region.

The protein belongs to the bacterial ribosomal protein bL35 family.

The sequence is that of Large ribosomal subunit protein bL35 from Anaplasma marginale (strain Florida).